The chain runs to 275 residues: Phage-like element PBSX protein XkdF (275 aa).

The tract at residues 247-275 (KARGASKQTADDTGGNTEQVKKSIWSGLL) is disordered.

To B.subtilis YqbD.

This chain is Phage-like element PBSX protein XkdF (xkdF), found in Bacillus subtilis (strain 168).